A 138-amino-acid polypeptide reads, in one-letter code: ATP synthase epsilon chain (138 aa).

Belongs to the ATPase epsilon chain family. In terms of assembly, F-type ATPases have 2 components, CF(1) - the catalytic core - and CF(0) - the membrane proton channel. CF(1) has five subunits: alpha(3), beta(3), gamma(1), delta(1), epsilon(1). CF(0) has three main subunits: a, b and c.

It is found in the cell membrane. Its function is as follows. Produces ATP from ADP in the presence of a proton gradient across the membrane. This Streptococcus suis (strain 98HAH33) protein is ATP synthase epsilon chain.